Reading from the N-terminus, the 102-residue chain is uncharacterized protein (102 aa).

3 consecutive transmembrane segments (helical) span residues 14-34 (IKNW…VISA), 35-55 (VAFT…LILI), and 76-96 (ILSI…HCYI).

It is found in the cell membrane. This is an uncharacterized protein from Methanocaldococcus jannaschii (strain ATCC 43067 / DSM 2661 / JAL-1 / JCM 10045 / NBRC 100440) (Methanococcus jannaschii).